The sequence spans 222 residues: Urease accessory protein UreF (222 aa).

It belongs to the UreF family. UreD, UreF and UreG form a complex that acts as a GTP-hydrolysis-dependent molecular chaperone, activating the urease apoprotein by helping to assemble the nickel containing metallocenter of UreC. The UreE protein probably delivers the nickel.

It is found in the cytoplasm. In terms of biological role, required for maturation of urease via the functional incorporation of the urease nickel metallocenter. The protein is Urease accessory protein UreF of Hahella chejuensis (strain KCTC 2396).